Consider the following 1293-residue polypeptide: Phosphoribosylformylglycinamidine synthase (1293 aa).

ATP is bound by residues 308–319 (GAATGAGGEIRD) and alanine 675. Residues aspartate 676, glutamate 715, asparagine 719, and aspartate 883 each coordinate Mg(2+). Serine 885 provides a ligand contact to ATP. The region spanning 1040–1293 (MAILREQGVN…MFRNARKFIG (254 aa)) is the Glutamine amidotransferase type-1 domain. Catalysis depends on cysteine 1133, which acts as the Nucleophile. Catalysis depends on residues histidine 1258 and glutamate 1260.

The protein in the N-terminal section; belongs to the FGAMS family. In terms of assembly, monomer.

It is found in the cytoplasm. It carries out the reaction N(2)-formyl-N(1)-(5-phospho-beta-D-ribosyl)glycinamide + L-glutamine + ATP + H2O = 2-formamido-N(1)-(5-O-phospho-beta-D-ribosyl)acetamidine + L-glutamate + ADP + phosphate + H(+). The protein operates within purine metabolism; IMP biosynthesis via de novo pathway; 5-amino-1-(5-phospho-D-ribosyl)imidazole from N(2)-formyl-N(1)-(5-phospho-D-ribosyl)glycinamide: step 1/2. Phosphoribosylformylglycinamidine synthase involved in the purines biosynthetic pathway. Catalyzes the ATP-dependent conversion of formylglycinamide ribonucleotide (FGAR) and glutamine to yield formylglycinamidine ribonucleotide (FGAM) and glutamate. The chain is Phosphoribosylformylglycinamidine synthase from Methylobacillus flagellatus (strain ATCC 51484 / DSM 6875 / VKM B-1610 / KT).